A 271-amino-acid chain; its full sequence is Chorismate dehydratase (271 aa).

This sequence belongs to the MqnA/MqnD family. MqnA subfamily.

It catalyses the reaction chorismate = 3-[(1-carboxyvinyl)-oxy]benzoate + H2O. It participates in quinol/quinone metabolism; menaquinone biosynthesis. Catalyzes the dehydration of chorismate into 3-[(1-carboxyvinyl)oxy]benzoate, a step in the biosynthesis of menaquinone (MK, vitamin K2). The protein is Chorismate dehydratase of Thermus thermophilus (strain ATCC 27634 / DSM 579 / HB8).